Reading from the N-terminus, the 478-residue chain is NADH oxidase (478 aa).

FAD is bound by residues 8–12 (GINHA), Asp33, Cys43, Val80, 111–114 (ASGA), Lys149, and Tyr177. His11 (proton acceptor) is an active-site residue. Cys43 functions as the Redox-active in the catalytic mechanism. The residue at position 43 (Cys43) is a Cysteine sulfinic acid (-SO2H). NAD(+)-binding positions include 170–185 (VAIV…LAEA), Asp197, and Gly264. FAD-binding positions include 295 to 305 (LNHKDVYVIGG), Leu322, Ala323, and Thr324. Ala353 provides a ligand contact to NAD(+). FAD is bound at residue Phe450.

It belongs to the class-III pyridine nucleotide-disulfide oxidoreductase family. FAD serves as cofactor.

It carries out the reaction 2 NADH + O2 + 2 H(+) = 2 NAD(+) + 2 H2O. Catalyzes the four-electron reduction of molecular oxygen to water. This Mycoplasma genitalium (strain ATCC 33530 / DSM 19775 / NCTC 10195 / G37) (Mycoplasmoides genitalium) protein is NADH oxidase (nox).